The primary structure comprises 219 residues: Uracil-DNA glycosylase (219 aa).

Catalysis depends on D64, which acts as the Proton acceptor.

Belongs to the uracil-DNA glycosylase (UDG) superfamily. UNG family.

The protein resides in the cytoplasm. The enzyme catalyses Hydrolyzes single-stranded DNA or mismatched double-stranded DNA and polynucleotides, releasing free uracil.. Excises uracil residues from the DNA which can arise as a result of misincorporation of dUMP residues by DNA polymerase or due to deamination of cytosine. The sequence is that of Uracil-DNA glycosylase from Leuconostoc citreum (strain KM20).